A 277-amino-acid polypeptide reads, in one-letter code: Small ribosomal subunit protein uS2 (277 aa).

The segment at 254 to 277 (LAGAGSSALNDSGADLSEANPTEA) is disordered.

It belongs to the universal ribosomal protein uS2 family.

The polypeptide is Small ribosomal subunit protein uS2 (rpsB) (Mycobacterium leprae (strain TN)).